Reading from the N-terminus, the 42-residue chain is MALILQIFPFANAEIVTAAVTCIFMTLFGLSLGFALLKVQGE.

A helical membrane pass occupies residues 19 to 37; that stretch reads AVTCIFMTLFGLSLGFALL.

Belongs to the PetM family. The 4 large subunits of the cytochrome b6-f complex are cytochrome b6, subunit IV (17 kDa polypeptide, PetD), cytochrome f and the Rieske protein, while the 4 small subunits are PetG, PetL, PetM and PetN. The complex functions as a dimer.

Its subcellular location is the plastid. The protein localises to the chloroplast thylakoid membrane. In terms of biological role, component of the cytochrome b6-f complex, which mediates electron transfer between photosystem II (PSII) and photosystem I (PSI), cyclic electron flow around PSI, and state transitions. The polypeptide is Cytochrome b6-f complex subunit 7 (Thalassiosira pseudonana (Marine diatom)).